We begin with the raw amino-acid sequence, 137 residues long: Small ribosomal subunit protein uS12 (137 aa).

Position 102 is a 3-methylthioaspartic acid (D102).

Belongs to the universal ribosomal protein uS12 family. As to quaternary structure, part of the 30S ribosomal subunit. Contacts proteins S8 and S17. May interact with IF1 in the 30S initiation complex.

With S4 and S5 plays an important role in translational accuracy. In terms of biological role, interacts with and stabilizes bases of the 16S rRNA that are involved in tRNA selection in the A site and with the mRNA backbone. Located at the interface of the 30S and 50S subunits, it traverses the body of the 30S subunit contacting proteins on the other side and probably holding the rRNA structure together. The combined cluster of proteins S8, S12 and S17 appears to hold together the shoulder and platform of the 30S subunit. This is Small ribosomal subunit protein uS12 from Mycoplasmopsis agalactiae (strain NCTC 10123 / CIP 59.7 / PG2) (Mycoplasma agalactiae).